The chain runs to 303 residues: Probable cat1 operon transcriptional activator (303 aa).

The region spanning 1-58 (MDLRQFRYFVAVARERNFTRAARQLNIAQPPLSRQIQLLEEEVGVPLLIRNSRPVQLT) is the HTH lysR-type domain. The H-T-H motif DNA-binding region spans 18-37 (FTRAARQLNIAQPPLSRQIQ).

It belongs to the LysR transcriptional regulatory family.

Probable positive regulator of the cat1 operon which encode enzymes responsible for the degradation of catechol to acetyl-CoA via the beta-ketoadipate pathway. This chain is Probable cat1 operon transcriptional activator, found in Acinetobacter lwoffii.